We begin with the raw amino-acid sequence, 294 residues long: Protease HtpX (294 aa).

The next 2 helical transmembrane spans lie at 4-24 and 33-53; these read ILLF…ILFI and FGLI…SLLL. Position 139 (His139) interacts with Zn(2+). Glu140 is a catalytic residue. His143 is a binding site for Zn(2+). 2 helical membrane passes run 147–167 and 197–217; these read GDMI…IFLS and FFIS…ITFW. Glu223 lines the Zn(2+) pocket.

The protein belongs to the peptidase M48B family. It depends on Zn(2+) as a cofactor.

Its subcellular location is the cell membrane. This Wigglesworthia glossinidia brevipalpis protein is Protease HtpX.